The chain runs to 138 residues: Drosulfakinins (138 aa).

The signal sequence occupies residues 1–33; the sequence is MGLRSCTHFATLVMPLWALAFCFLVLVPVPAQT. A propeptide spanning residues 34–73 is cleaved from the precursor; that stretch reads TSLQISKGDRRLQDLESNMGAESDQPNANLVGTSLSRFGD. A Phenylalanine amide modification is found at Phe82. A propeptide spanning residues 86 to 108 is cleaved from the precursor; it reads VPRPIIPIELDLLMDNDDENTKA. Tyr114 is subject to Sulfotyrosine. Phe119 carries the phenylalanine amide modification. Tyr131 is subject to Sulfotyrosine. Phe136 bears the Phenylalanine amide mark.

Belongs to the gastrin/cholecystokinin family.

Its subcellular location is the secreted. Drosulfakinin-0 (DSK 0) plays diverse biological roles including regulating gut muscle contraction in adults but not in larvae. The polypeptide is Drosulfakinins (Drosophila teissieri (Fruit fly)).